We begin with the raw amino-acid sequence, 791 residues long: uncharacterized protein (791 aa).

Residues 10-30 form a helical membrane-spanning segment; that stretch reads LLTITIGAVAVSSILLGGIFY. Positions 56–76 are enriched in basic and acidic residues; it reads NLDYQKARPSIKDNNLKEIPK. Residues 56 to 175 form a disordered region; it reads NLDYQKARPS…PQPQQIPNQS (120 aa). The segment covering 77–97 has biased composition (pro residues); it reads PKPQPKPEPQPTPFPDPIPTP. Residues 98-124 are compositionally biased toward basic and acidic residues; it reads PKKEELKKPEIKPEEPKKPEIKPEPIP. The span at 125–139 shows a compositional bias: pro residues; the sequence is KPKPQPIPQPTPPVE.

To U.parvum UU044.

Its subcellular location is the membrane. This is an uncharacterized protein from Ureaplasma parvum serovar 3 (strain ATCC 700970).